Here is a 477-residue protein sequence, read N- to C-terminus: Shikimate biosynthesis protein AroDE (477 aa).

The tract at residues 1-209 (MLCATVSGPS…LEELLSYNYS (209 aa)) is 3-dehydroquinate dehydratase. 3-dehydroquinate-binding positions include S21, 29 to 31 (ELR), and 56 to 58 (TFR). The active-site Proton donor/acceptor; for 3-dehydroquinate dehydratase activity is H111. K134 (schiff-base intermediate with substrate; for 3-dehydroquinate dehydratase activity) is an active-site residue. 3-dehydroquinate is bound by residues R172 and Q197. The shikimate 5-dehydrogenase stretch occupies residues 210–477 (KLSEKSHIYG…NYVKNFMAKV (268 aa)). 228-230 (SIS) provides a ligand contact to shikimate. Catalysis depends on K279, which acts as the Proton acceptor; for shikimate dehydrogenase activity. Residues N300 and D315 each contribute to the shikimate site. NADP(+) contacts are provided by residues 339–343 (GAGGA), 362–364 (NRT), and G438. Q445 lines the shikimate pocket.

In the N-terminal section; belongs to the type-I 3-dehydroquinase family. This sequence in the C-terminal section; belongs to the shikimate dehydrogenase family.

It carries out the reaction 3-dehydroquinate = 3-dehydroshikimate + H2O. The enzyme catalyses shikimate + NADP(+) = 3-dehydroshikimate + NADPH + H(+). It participates in metabolic intermediate biosynthesis; chorismate biosynthesis; chorismate from D-erythrose 4-phosphate and phosphoenolpyruvate: step 3/7. It functions in the pathway metabolic intermediate biosynthesis; chorismate biosynthesis; chorismate from D-erythrose 4-phosphate and phosphoenolpyruvate: step 4/7. In terms of biological role, bifunctional enzyme that catalyzes two sequential steps of the aromatic amino acids biosynthetic pathway. In the first reaction, the AroD domain catalyzes the cis-dehydration of 3-dehydroquinate (DHQ) and introduces the first double bond of the aromatic ring to yield 3-dehydroshikimate; in the second reaction, the AroE domain catalyzes the reversible NADPH linked reduction of 3-dehydroshikimate (DHSA) to yield shikimate (SA). This is Shikimate biosynthesis protein AroDE from Chlamydia pneumoniae (Chlamydophila pneumoniae).